Here is a 274-residue protein sequence, read N- to C-terminus: Bis(5'-nucleosyl)-tetraphosphatase, symmetrical (274 aa).

It belongs to the Ap4A hydrolase family.

It catalyses the reaction P(1),P(4)-bis(5'-adenosyl) tetraphosphate + H2O = 2 ADP + 2 H(+). Hydrolyzes diadenosine 5',5'''-P1,P4-tetraphosphate to yield ADP. In Buchnera aphidicola subsp. Acyrthosiphon pisum (strain APS) (Acyrthosiphon pisum symbiotic bacterium), this protein is Bis(5'-nucleosyl)-tetraphosphatase, symmetrical (apaH).